Consider the following 474-residue polypeptide: Cysteine--tRNA ligase (474 aa).

Zn(2+) is bound at residue Cys34. The 'HIGH' region motif lies at 36 to 46 (PTVYDYAHIGN). Residues Cys219, His244, and Glu248 each coordinate Zn(2+). The 'KMSKS' region signature appears at 276–280 (KMSKS). Lys279 serves as a coordination point for ATP.

Belongs to the class-I aminoacyl-tRNA synthetase family. Monomer. Requires Zn(2+) as cofactor.

It localises to the cytoplasm. The catalysed reaction is tRNA(Cys) + L-cysteine + ATP = L-cysteinyl-tRNA(Cys) + AMP + diphosphate. This Chlamydia pneumoniae (Chlamydophila pneumoniae) protein is Cysteine--tRNA ligase (cysS).